Reading from the N-terminus, the 450-residue chain is Glutamate--tRNA ligase 2 (450 aa).

The short motif at 10–20 is the 'HIGH' region element; it reads PSPTGFLHIGG. Positions 232–236 match the 'KMSKS' region motif; sequence KLSKR. Lysine 235 serves as a coordination point for ATP.

This sequence belongs to the class-I aminoacyl-tRNA synthetase family. Glutamate--tRNA ligase type 1 subfamily. In terms of assembly, monomer.

The protein localises to the cytoplasm. It carries out the reaction tRNA(Glu) + L-glutamate + ATP = L-glutamyl-tRNA(Glu) + AMP + diphosphate. Functionally, catalyzes the attachment of glutamate to tRNA(Glu) in a two-step reaction: glutamate is first activated by ATP to form Glu-AMP and then transferred to the acceptor end of tRNA(Glu). The polypeptide is Glutamate--tRNA ligase 2 (Wolbachia pipientis subsp. Culex pipiens (strain wPip)).